A 509-amino-acid polypeptide reads, in one-letter code: Photosystem II CP47 reaction center protein (509 aa).

6 consecutive transmembrane segments (helical) span residues 21–36, 101–115, 140–156, 203–218, 237–252, and 457–472; these read AVHL…WAGS, IGLS…IWHW, GIHL…FGAF, IAAG…FHLS, VLSS…AFIV, and SFAL…HGGR.

This sequence belongs to the PsbB/PsbC family. PsbB subfamily. In terms of assembly, PSII is composed of 1 copy each of membrane proteins PsbA, PsbB, PsbC, PsbD, PsbE, PsbF, PsbH, PsbI, PsbJ, PsbK, PsbL, PsbM, PsbT, PsbX, PsbY, PsbZ, Psb30/Ycf12, at least 3 peripheral proteins of the oxygen-evolving complex and a large number of cofactors. It forms dimeric complexes. Binds multiple chlorophylls. PSII binds additional chlorophylls, carotenoids and specific lipids. serves as cofactor.

It localises to the plastid. Its subcellular location is the cyanelle thylakoid membrane. In terms of biological role, one of the components of the core complex of photosystem II (PSII). It binds chlorophyll and helps catalyze the primary light-induced photochemical processes of PSII. PSII is a light-driven water:plastoquinone oxidoreductase, using light energy to abstract electrons from H(2)O, generating O(2) and a proton gradient subsequently used for ATP formation. The chain is Photosystem II CP47 reaction center protein from Cyanophora paradoxa.